A 262-amino-acid polypeptide reads, in one-letter code: DNA repair protein RecO (262 aa).

This sequence belongs to the RecO family.

Involved in DNA repair and RecF pathway recombination. This is DNA repair protein RecO from Acidovorax ebreus (strain TPSY) (Diaphorobacter sp. (strain TPSY)).